A 622-amino-acid polypeptide reads, in one-letter code: Low affinity potassium transport system protein Kup (622 aa).

Helical transmembrane passes span 9 to 29, 49 to 69, 101 to 121, 137 to 157, 163 to 183, 213 to 233, 247 to 267, 276 to 296, 337 to 357, 363 to 383, 395 to 415, and 419 to 439; these read LPALTLAAIGVVYGDIGTSPL, VFGFLSLIFWLLIFTVSIKYI, VLVILGLIGGSFFYGEVVITP, PQLDTWIVPISIIVLTLLFVI, GMVGKLFAPIMLIWFLLLAVL, VSFIALGAVVLSITGVEALYA, WFSVVLPSLVLNYFGQGALLL, PFFLLAPEWALIPMLIIATLA, IYIPFINWLLYVSVVIVIVSF, LAAAYGIAVTGTMVLTSILSA, LFVGLMLVAFLCIDIPLFSAN, and IVSGGWLPLSLGMVMFTVMTT.

Belongs to the HAK/KUP transporter (TC 2.A.72) family.

It is found in the cell inner membrane. It carries out the reaction K(+)(in) + H(+)(in) = K(+)(out) + H(+)(out). Responsible for the low-affinity transport of potassium into the cell. Likely operates as a K(+):H(+) symporter. This is Low affinity potassium transport system protein Kup from Klebsiella pneumoniae subsp. pneumoniae (strain ATCC 700721 / MGH 78578).